The following is a 141-amino-acid chain: Large ribosomal subunit protein uL22 (141 aa).

This sequence belongs to the universal ribosomal protein uL22 family. Part of the 50S ribosomal subunit.

Functionally, this protein binds specifically to 23S rRNA; its binding is stimulated by other ribosomal proteins, e.g. L4, L17, and L20. It is important during the early stages of 50S assembly. It makes multiple contacts with different domains of the 23S rRNA in the assembled 50S subunit and ribosome. Its function is as follows. The globular domain of the protein is located near the polypeptide exit tunnel on the outside of the subunit, while an extended beta-hairpin is found that lines the wall of the exit tunnel in the center of the 70S ribosome. The sequence is that of Large ribosomal subunit protein uL22 from Frankia casuarinae (strain DSM 45818 / CECT 9043 / HFP020203 / CcI3).